The sequence spans 416 residues: RNA polymerase sigma factor SigA (416 aa).

The segment at 184–254 (MVQSNLRLVV…TRAIADQSRT (71 aa)) is sigma-70 factor domain-2. The short motif at 208–211 (DLIQ) is the Interaction with polymerase core subunit RpoC element. Positions 263 to 338 (ETISRIKKTT…EADGETPEDE (76 aa)) are sigma-70 factor domain-3. Positions 351–404 (VLDTLSPRERDVLRLRYGLDDGRMKTLEEIGQIFNVTRERIRQIEAKALRKLRH) are sigma-70 factor domain-4. Positions 377 to 396 (LEEIGQIFNVTRERIRQIEA) form a DNA-binding region, H-T-H motif.

This sequence belongs to the sigma-70 factor family. RpoD/SigA subfamily. In terms of assembly, interacts transiently with the RNA polymerase catalytic core.

It is found in the cytoplasm. Sigma factors are initiation factors that promote the attachment of RNA polymerase to specific initiation sites and are then released. This sigma factor is the primary sigma factor during exponential growth. In Microcystis aeruginosa, this protein is RNA polymerase sigma factor SigA.